The primary structure comprises 131 residues: Small ribosomal subunit protein uS8 (131 aa).

This sequence belongs to the universal ribosomal protein uS8 family. Part of the 30S ribosomal subunit. Contacts proteins S5 and S12.

Its function is as follows. One of the primary rRNA binding proteins, it binds directly to 16S rRNA central domain where it helps coordinate assembly of the platform of the 30S subunit. The polypeptide is Small ribosomal subunit protein uS8 (Helicobacter pylori (strain P12)).